A 156-amino-acid chain; its full sequence is Ecotin (156 aa).

A signal peptide spans 1-19; it reads MKALLIAAGVAALSSTAMA. Residues cysteine 65 and cysteine 102 are joined by a disulfide bond.

The protein belongs to the protease inhibitor I11 (ecotin) family. Homodimer.

Its subcellular location is the periplasm. Functionally, general inhibitor of family S1 serine proteases. The chain is Ecotin from Pseudomonas aeruginosa (strain ATCC 15692 / DSM 22644 / CIP 104116 / JCM 14847 / LMG 12228 / 1C / PRS 101 / PAO1).